We begin with the raw amino-acid sequence, 103 residues long: Large ribosomal subunit protein bL21 (103 aa).

Belongs to the bacterial ribosomal protein bL21 family. In terms of assembly, part of the 50S ribosomal subunit. Contacts protein L20.

In terms of biological role, this protein binds to 23S rRNA in the presence of protein L20. The chain is Large ribosomal subunit protein bL21 from Aliivibrio fischeri (strain ATCC 700601 / ES114) (Vibrio fischeri).